The chain runs to 121 residues: Basic phospholipase A2 homolog GodMT-II (121 aa).

7 cysteine pairs are disulfide-bonded: C26–C115, C28–C44, C43–C95, C49–C121, C50–C88, C57–C81, and C75–C86. The segment at 105 to 117 is important for membrane-damaging activities in eukaryotes and bacteria; heparin-binding; the sequence is KNYKIYPKPLCKK.

Belongs to the phospholipase A2 family. Group II subfamily. K49 sub-subfamily. In terms of assembly, monomer. Expressed by the venom gland.

It is found in the secreted. Snake venom phospholipase A2 homolog that lacks enzymatic activity but shows high myotoxic activities. In vivo, induces a mild edema when subcutaneously injected into mice foot pad. The polypeptide is Basic phospholipase A2 homolog GodMT-II (Cerrophidion godmani (Porthidium godmani)).